The chain runs to 692 residues: Elongation factor G (692 aa).

The tr-type G domain maps to 8-283 (NRIRNIGIAA…AVIDYLPAPT (276 aa)). GTP is bound by residues 17–24 (AHIDAGKT), 81–85 (DTPGH), and 135–138 (NKMD).

This sequence belongs to the TRAFAC class translation factor GTPase superfamily. Classic translation factor GTPase family. EF-G/EF-2 subfamily.

The protein resides in the cytoplasm. In terms of biological role, catalyzes the GTP-dependent ribosomal translocation step during translation elongation. During this step, the ribosome changes from the pre-translocational (PRE) to the post-translocational (POST) state as the newly formed A-site-bound peptidyl-tRNA and P-site-bound deacylated tRNA move to the P and E sites, respectively. Catalyzes the coordinated movement of the two tRNA molecules, the mRNA and conformational changes in the ribosome. In Helicobacter pylori (strain HPAG1), this protein is Elongation factor G.